The primary structure comprises 302 residues: Phosphoribosylaminoimidazole-succinocarboxamide synthase (302 aa).

It belongs to the SAICAR synthetase family.

The enzyme catalyses 5-amino-1-(5-phospho-D-ribosyl)imidazole-4-carboxylate + L-aspartate + ATP = (2S)-2-[5-amino-1-(5-phospho-beta-D-ribosyl)imidazole-4-carboxamido]succinate + ADP + phosphate + 2 H(+). It functions in the pathway purine metabolism; IMP biosynthesis via de novo pathway; 5-amino-1-(5-phospho-D-ribosyl)imidazole-4-carboxamide from 5-amino-1-(5-phospho-D-ribosyl)imidazole-4-carboxylate: step 1/2. The polypeptide is Phosphoribosylaminoimidazole-succinocarboxamide synthase (Cupriavidus pinatubonensis (strain JMP 134 / LMG 1197) (Cupriavidus necator (strain JMP 134))).